The chain runs to 235 residues: Small ribosomal subunit protein uS3 (235 aa).

Residues Ile-39–Arg-107 enclose the KH type-2 domain. A disordered region spans residues Gln-215–Ala-235.

It belongs to the universal ribosomal protein uS3 family. As to quaternary structure, part of the 30S ribosomal subunit. Forms a tight complex with proteins S10 and S14.

Its function is as follows. Binds the lower part of the 30S subunit head. Binds mRNA in the 70S ribosome, positioning it for translation. The protein is Small ribosomal subunit protein uS3 of Rhodopseudomonas palustris (strain ATCC BAA-98 / CGA009).